The chain runs to 93 residues: UPF0728 protein C10orf53 (93 aa).

It belongs to the UPF0728 family.

This is UPF0728 protein C10orf53 (C10orf53) from Homo sapiens (Human).